A 407-amino-acid polypeptide reads, in one-letter code: Transcriptional regulator ICP22 homolog (407 aa).

Positions 34 to 268 are disordered; it reads RKRRRKLKPQ…STQPGGVPKL (235 aa). A compositionally biased stretch (acidic residues) spans 81-241; it reads EREGEGGEEG…EEAEEEEEEA (161 aa).

This sequence belongs to the herpesviridae ICP22 family.

The chain is Transcriptional regulator ICP22 homolog (73) from Saimiriine herpesvirus 2 (strain 11) (SaHV-2).